Here is a 192-residue protein sequence, read N- to C-terminus: MDKFNINEKMKRTKIITTIGPSTHSPGAIEELFKTGMTTIRLNFSHGDHAEQGARIVWAREVSAKIGKPISVLLDTKGPEIHWRIKGLLQKSLNIYHQMNNSLMFSPSFCKFLHYHYTLLLSKKTKKQLLKIVKKLKKLQSQHYNLAHGLRETWTSSFCFNERPSIWRLLSSFKQIVTSFKISLVSKVLIKL.

A substrate-binding site is contributed by Arg-41. K(+) contacts are provided by Asn-43, Ser-45, Asp-75, and Thr-76. 43–46 (NFSH) contributes to the ATP binding site.

The protein belongs to the pyruvate kinase family. Requires Mg(2+) as cofactor. K(+) serves as cofactor.

The catalysed reaction is pyruvate + ATP = phosphoenolpyruvate + ADP + H(+). It participates in carbohydrate degradation; glycolysis; pyruvate from D-glyceraldehyde 3-phosphate: step 5/5. In Spiroplasma citri, this protein is Pyruvate kinase (pyk).